Here is a 616-residue protein sequence, read N- to C-terminus: Homeodomain-interacting protein kinase 4 (616 aa).

In terms of domain architecture, Protein kinase spans 11–347 (YDIIEVLGKG…PSAALRHPFV (337 aa)). Residues 17-25 (LGKGTFGEV) and lysine 40 contribute to the ATP site. The active-site Proton acceptor is aspartate 136. A disordered region spans residues 487-616 (HKARKAPAGS…SFLQHVGGHH (130 aa)). Polar residues predominate over residues 497–512 (KSDSNFSNLIRLSQAS). The residue at position 512 (serine 512) is a Phosphoserine. Residues 542–560 (REGDGPSIKDRPMDAERSG) show a composition bias toward basic and acidic residues.

The protein belongs to the protein kinase superfamily. CMGC Ser/Thr protein kinase family. HIPK subfamily. Autophosphorylated.

It is found in the cytoplasm. It catalyses the reaction L-seryl-[protein] + ATP = O-phospho-L-seryl-[protein] + ADP + H(+). It carries out the reaction L-threonyl-[protein] + ATP = O-phospho-L-threonyl-[protein] + ADP + H(+). In terms of biological role, protein kinase that phosphorylates TP53, and thus induces TP53 repression of BIRC5 promoter. May act as a corepressor of transcription factors (Potential). This Rattus norvegicus (Rat) protein is Homeodomain-interacting protein kinase 4 (Hipk4).